We begin with the raw amino-acid sequence, 99 residues long: Large ribosomal subunit protein eL36 (99 aa).

This sequence belongs to the eukaryotic ribosomal protein eL36 family. Component of the large ribosomal subunit. Mature ribosomes consist of a small (40S) and a large (60S) subunit. The 40S subunit contains about 32 different proteins and 1 molecule of RNA (18S). The 60S subunit contains 45 different proteins and 3 molecules of RNA (25S, 5.8S and 5S).

It is found in the cytoplasm. Component of the ribosome, a large ribonucleoprotein complex responsible for the synthesis of proteins in the cell. The small ribosomal subunit (SSU) binds messenger RNAs (mRNAs) and translates the encoded message by selecting cognate aminoacyl-transfer RNA (tRNA) molecules. The large subunit (LSU) contains the ribosomal catalytic site termed the peptidyl transferase center (PTC), which catalyzes the formation of peptide bonds, thereby polymerizing the amino acids delivered by tRNAs into a polypeptide chain. The nascent polypeptides leave the ribosome through a tunnel in the LSU and interact with protein factors that function in enzymatic processing, targeting, and the membrane insertion of nascent chains at the exit of the ribosomal tunnel. The polypeptide is Large ribosomal subunit protein eL36 (Candida albicans (strain SC5314 / ATCC MYA-2876) (Yeast)).